We begin with the raw amino-acid sequence, 186 residues long: Adenine phosphoribosyltransferase (186 aa).

This sequence belongs to the purine/pyrimidine phosphoribosyltransferase family. In terms of assembly, homodimer.

It localises to the cytoplasm. The catalysed reaction is AMP + diphosphate = 5-phospho-alpha-D-ribose 1-diphosphate + adenine. It functions in the pathway purine metabolism; AMP biosynthesis via salvage pathway; AMP from adenine: step 1/1. Catalyzes a salvage reaction resulting in the formation of AMP, that is energically less costly than de novo synthesis. The sequence is that of Adenine phosphoribosyltransferase from Xanthomonas oryzae pv. oryzae (strain MAFF 311018).